The following is a 191-amino-acid chain: Adenylate kinase (191 aa).

10 to 15 contacts ATP; it reads GAGKGT. Positions 30–59 are NMP; it reads STGDMLRAARTSGTEMGNLVAGVMDRGELV. Residues Thr31, Arg36, 57–59, 83–86, and Gln90 contribute to the AMP site; these read ELV and GFPR. The interval 124–140 is LID; sequence NRAKEAAAAGQPVRADD. Arg125 provides a ligand contact to ATP. AMP contacts are provided by Arg137 and Arg148. Position 176 (Gly176) interacts with ATP.

This sequence belongs to the adenylate kinase family. As to quaternary structure, monomer.

The protein localises to the cytoplasm. It carries out the reaction AMP + ATP = 2 ADP. It participates in purine metabolism; AMP biosynthesis via salvage pathway; AMP from ADP: step 1/1. Catalyzes the reversible transfer of the terminal phosphate group between ATP and AMP. Plays an important role in cellular energy homeostasis and in adenine nucleotide metabolism. The chain is Adenylate kinase from Jannaschia sp. (strain CCS1).